The chain runs to 508 residues: MDKKKYIITLDEGTTSCRSIVFDKQAKIVSVAQNEFTQYFPQSGWVEHDPLEIWNTQLSTMQSVKNKAQIKSVNVEAVGITNQRETVVLWNKETGLPVYNAIVWQDRRTSEYCETLTKHVDKVREKTGLIINPYFSGTKIRWILKNVPLAQKTLKAGKLLAGTIDSWLIWKLTGGKVHATDVSNASRTLLFNIHTMDWDQELLDLFEIPRSILPEVKSSSEVYGYVEPSLWSQRATAKVPITGVAGDQQSALFGQLCLKPGMVKNTYGTGCFTLMNIGEKPIMSKNKLLTTVAWKLGKKKPVYALEGSVFIAGAAVQWIRDGLRLIYDAAESDFYANLASKQDTHQVYLVPSFTGLGAPYWDSYSRGAIFGLERGTKKEHIIKATLESIVFQTNDLIKAMSSDVGKKIEVVKVDGGATRSEYIMQFQSSISGVNVIRPKNIESTALGATFLAGLAVGYWKDLKELEKLVKVDKEFKPKLDKEKVEKLVHGWNVAVKRTFNWMKEVDLK.

Thr-14 lines the ADP pocket. Thr-14, Thr-15, and Ser-16 together coordinate ATP. Thr-14 is a sn-glycerol 3-phosphate binding site. Residue Arg-18 participates in ADP binding. Residues Arg-84, Glu-85, Tyr-134, and Asp-247 each coordinate sn-glycerol 3-phosphate. Glycerol-binding residues include Arg-84, Glu-85, Tyr-134, Asp-247, and Gln-248. Residues Thr-269 and Gly-313 each coordinate ADP. Thr-269, Gly-313, Gln-317, and Gly-416 together coordinate ATP. Gly-416 provides a ligand contact to ADP.

The protein belongs to the FGGY kinase family.

It carries out the reaction glycerol + ATP = sn-glycerol 3-phosphate + ADP + H(+). The protein operates within polyol metabolism; glycerol degradation via glycerol kinase pathway; sn-glycerol 3-phosphate from glycerol: step 1/1. Its activity is regulated as follows. Inhibited by fructose 1,6-bisphosphate (FBP). Its function is as follows. Key enzyme in the regulation of glycerol uptake and metabolism. Catalyzes the phosphorylation of glycerol to yield sn-glycerol 3-phosphate. The sequence is that of Glycerol kinase from Mycoplasmoides gallisepticum (strain R(low / passage 15 / clone 2)) (Mycoplasma gallisepticum).